The following is a 430-amino-acid chain: MAPSPEGVTVVLGAQWGDEGKGKLVDILAAEADICARCAGGNNAGHTIVVRNDKGEKTSYAFNLLPSGLINPECTAFIGSGVVVHVPSLFNELDTLERKGLKVAGRLFVSDRAHLVMGFHQIVDGLKEVELGGSSIGTTRKGIGPAYSSKASRSGLRVHHLFDPTFPAKFRKLVEGRFKRYGHFEFDTEGEIEMYLAFAERLRPFIVDGPTFMHNAVNSGKRVLVEGANALMLDLDYGTYPFVTSSSTSIGGVVSGLGISPFAIKRVVGVIKAYTTRVGGGPFPTEDLATVGETLQEVGAEYGTVTGRRRRCGWLDLVVMKYSTMINGYTSLNLTKLDVLDGFDEIKVATGYKIDGVEVEGFPADLDRLAKVEVQYATLPGWKTDISNCKTYEEFPENAKAYIKFIEDYLGVKVQYVGVGPGRDQNVIIF.

Residues 17-23 (GDEGKGK) and 45-47 (GHT) contribute to the GTP site. The Proton acceptor role is filled by D18. Positions 18 and 45 each coordinate Mg(2+). IMP contacts are provided by residues 18–21 (DEGK), 43–46 (NAGH), T139, R153, N229, T244, and R308. H46 functions as the Proton donor in the catalytic mechanism. 304–310 (TVTGRRR) is a binding site for substrate. Residues R310, 336–338 (KLD), and 418–420 (GVG) each bind GTP.

It belongs to the adenylosuccinate synthetase family. In terms of assembly, homodimer. Mg(2+) serves as cofactor.

It localises to the cytoplasm. It carries out the reaction IMP + L-aspartate + GTP = N(6)-(1,2-dicarboxyethyl)-AMP + GDP + phosphate + 2 H(+). It participates in purine metabolism; AMP biosynthesis via de novo pathway; AMP from IMP: step 1/2. Functionally, plays an important role in the de novo pathway and in the salvage pathway of purine nucleotide biosynthesis. Catalyzes the first committed step in the biosynthesis of AMP from IMP. This Cryptococcus neoformans var. neoformans serotype D (strain JEC21 / ATCC MYA-565) (Filobasidiella neoformans) protein is Adenylosuccinate synthetase.